Here is a 454-residue protein sequence, read N- to C-terminus: tRNA modification GTPase MnmE (454 aa).

Residues R23, E86, and R125 each contribute to the (6S)-5-formyl-5,6,7,8-tetrahydrofolate site. A TrmE-type G domain is found at 221-376 (GLTLAIVGRP…LREQILRMVS (156 aa)). N231 serves as a coordination point for K(+). Residues 231–236 (NVGKSS), 250–256 (TAIPGTT), and 275–278 (DTAG) contribute to the GTP site. S235 is a Mg(2+) binding site. Positions 250, 252, and 255 each coordinate K(+). Mg(2+) is bound at residue T256. Position 454 (K454) interacts with (6S)-5-formyl-5,6,7,8-tetrahydrofolate.

The protein belongs to the TRAFAC class TrmE-Era-EngA-EngB-Septin-like GTPase superfamily. TrmE GTPase family. As to quaternary structure, homodimer. Heterotetramer of two MnmE and two MnmG subunits. It depends on K(+) as a cofactor.

Its subcellular location is the cytoplasm. Functionally, exhibits a very high intrinsic GTPase hydrolysis rate. Involved in the addition of a carboxymethylaminomethyl (cmnm) group at the wobble position (U34) of certain tRNAs, forming tRNA-cmnm(5)s(2)U34. The protein is tRNA modification GTPase MnmE of Koribacter versatilis (strain Ellin345).